Here is a 522-residue protein sequence, read N- to C-terminus: WEB family protein At2g38370 (522 aa).

A disordered region spans residues 1–32; the sequence is MAEFPEPGTVNPDSDLSNGRAEKPEIDTSAPF. Coiled-coil stretches lie at residues 77 to 264 and 299 to 376; these read ELQR…AARE and ARSA…RSEN. Disordered stretches follow at residues 374 to 397 and 458 to 493; these read SENG…SRRE and MSLG…RKRK. Basic and acidic residues predominate over residues 473-486; it reads TVSKRSEGKENEKR.

This sequence belongs to the WEB family.

The sequence is that of WEB family protein At2g38370 from Arabidopsis thaliana (Mouse-ear cress).